The chain runs to 1216 residues: MEKSKKDGHQAVLNEGEENELEVFGYHTQNLRRALCLVTAILTLGAVQLMFYWRPEWWVWTSCIPCPLQEADTILLRTTDEFRRYMRKKVFCLHLSTLKFPISKNPEEPLVADHHSVINQAVMKPELKLRCIQVQKIRYVWDFLKKRFQKVGLLEDSNSCFDIHHTFGLGLTNEEQEVRRLVCGPNSIEVEIQPIWKLLVKQVLNPFYVFQAFTLTLWLSQGYIEYSVAIIILTVISIVLSVYDLRQQSVKLHKLVEEHNKVQVTITVRDKGLQELESRLLVPGDILILPGKISLPCDAILIDGSCVVNEGMLTGESIPVTKTPLPQTENTMPWKSHSLEDYRKHVLFCGTEVIQVKPSAQGLVRAVVLQTGYNTAKGDLVRSILYPRPLNFKLYNDAFKFMVFLACVGVVGFFYALGVYMYHEVPPRETATMALILLSATVPPVLPAALTIGNVYAQKRLKKEKIFCISPQRINMCGQINLVCFDKTGTLTEDGLDLWGTVPTAGNCFQAVHSFASGEAVPWGPLCAAMTSCHSLILLDGTIQGDPLDLKMFEGTGWNMEDSQVASCKFGMADSSTVIKPGPKASQSPVDSITILRQFPFSSGLQRMSVIAQLAGDLHLHVYMKGAPEMVARFCRSETVPKNFSQELRNYTVQGFRVIALAHKTLKMERLSDMDHLAREKVESELAFLGLLIMENRLKKETRPVLKELSEARIRTVMVTGDNLQTAITVAKNSEMIPVGSQVVIVEANEPGDLVPASVTWQLVGTQEPGSGKKDTYIDIGNSSVPAGKGYHFAMSGKSYQVLFHHFYSMLPQILVNGTIFARMSPGQKSSLVEEFQKLNYYVGMCGDGANDCGALKMAHAGISLSEQEASVASPFTSKTANIECVPHLIREGRAALVSSFGVFKYLTMYGIIQFIGTSLLYWQLQLFGNYQYLLQDVAITLMVSLTMSINHAYPKLAPYRPAGQLLSPQLLLSVFMNSCFTCIVQVCTFLTVKQQPWYCEVYKYSECFLVNQSNLSANVSLDRNWTGNATLVPASVLSFEGTTLWPIVTFNCISAAFIFSKGKPFRKPIYANYLFSLLLASAAGLTIFILFCDFQDLYRKMEFIPTPTSWRVSILIAAFVQFCVAFFVEDAVLQNRELWLFIKKEFGFYSKSQYRILQRKLAEDSTWPPVNRTDYAVNGKNGFYVNRAYESPEEVPKGKLKLEEQASEQHFWTRL.

5 helical membrane-spanning segments follow: residues arginine 33–tryptophan 53, leucine 198–tryptophan 218, glycine 222–valine 242, phenylalanine 401–methionine 421, and methionine 433–glycine 453. The active-site 4-aspartylphosphate intermediate is the aspartate 486. Asparagine 650 and asparagine 817 each carry an N-linked (GlcNAc...) asparagine glycan. Mg(2+) is bound by residues aspartate 848 and aspartate 852. 6 helical membrane-spanning segments follow: residues alanine 896 to isoleucine 916, tyrosine 933 to isoleucine 950, leucine 971 to leucine 991, phenylalanine 1040 to phenylalanine 1060, leucine 1075 to phenylalanine 1095, and valine 1113 to valine 1133.

Belongs to the cation transport ATPase (P-type) (TC 3.A.3) family. Type V subfamily. As to expression, specifically expressed in brain and stomach.

It is found in the membrane. The enzyme catalyses ATP + H2O = ADP + phosphate + H(+). The chain is Probable cation-transporting ATPase 13A5 (Atp13a5) from Mus musculus (Mouse).